The chain runs to 1273 residues: Ras-specific guanine nucleotide-releasing factor 1 (1273 aa).

One can recognise a PH 1 domain in the interval 22 to 129 (DGTRKGYLSK…WVAAIAHASY (108 aa)). The IQ domain maps to 204–229 (KKIKKVQSFLRGWLCRRKWKTIIQDY). One can recognise a DH domain in the interval 240–426 (KRNQVVFSML…EELSRIMHDE (187 aa)). A PH 2 domain is found at 467 to 584 (PMSEKGKITR…WTSDISQCVD (118 aa)). Phosphoserine; by PLK2 is present on residues Ser577 and Ser626. Residues 644–761 (KVLQIRYASV…SRRRKLSLNI (118 aa)) enclose the N-terminal Ras-GEF domain. The segment at 724-754 (YGEPPKSPRATRKFSSPPPLSITKTSSPSRR) is disordered. Ser758 is subject to Phosphoserine. Phosphoserine; by PLK2 occurs at positions 779 and 800. The disordered stretch occupies residues 809–874 (TNKIPDEGDT…PKSVKNKNSS (66 aa)). A compositionally biased stretch (acidic residues) spans 842 to 854 (SDIDQNQSDDGDT). Residues 855–867 (ETSPTKSPTTPKS) are compositionally biased toward low complexity. Residues 1038–1270 (SALEIAEQLT…YESSLRIEPK (233 aa)) form the Ras-GEF domain.

In terms of assembly, homooligomer and heterooligomer with RASGRF2. Interacts with USP8, thereby regulating its stability. Post-translationally, phosphorylated by PLK2, leading to ubiquitination and degradation by the proteasome. In terms of processing, ubiquitinated and degraded following phosphorylation by PLK2. Phosphorylated by SRC and LCK. Phosphorylation by LCK increases its capacity to stimulate the GDP/GTP exchange on Ras, whereas its phosphorylation by SRC seems not to have an effect on stimulation activity.

Functionally, promotes the exchange of Ras-bound GDP by GTP. This chain is Ras-specific guanine nucleotide-releasing factor 1 (RASGRF1), found in Homo sapiens (Human).